The chain runs to 341 residues: Probable cytosolic iron-sulfur protein assembly protein Ciao1 (341 aa).

WD repeat units follow at residues 12–51, 58–97, 102–141, 151–190, 197–236, 255–294, and 305–341; these read GHAGRVWSAAWHPGGKLFASCGEDKTIRVWNKSDTDRWVA, GHTRTIRELAWSCCGHYLASASFDTTVAVWDKKSGEFECN, GHDNEVKSVTWSRSGNLLATCSRDKSVWIWEIHHAPDQED, GHTQDVKKVCWHPQEDLLASASYDNTIRMYRQDLADSEWE, SHSSTVWSISFDATGQRLASCSEDTTVKVWQQYGPDNALG, YHSRSVYDIDWCKQTGLLATACGDDTVRIFREASDSDRNE, and AHSQDANKVAWHPTVPGLLLTASDDGEIKLWQYVDAD.

This sequence belongs to the WD repeat CIA1 family.

Essential component of the cytosolic iron-sulfur (Fe/S) protein assembly machinery. Required for the maturation of extramitochondrial Fe/S proteins. The sequence is that of Probable cytosolic iron-sulfur protein assembly protein Ciao1 from Anopheles gambiae (African malaria mosquito).